The chain runs to 282 residues: Putative peroxisomal biogenesis factor 19 (282 aa).

Residues 73–95 (QEEAMKKAGADPSEGEGEQPLDP) are disordered. A Cysteine methyl ester modification is found at C279. A lipid anchor (S-farnesyl cysteine) is attached at C279. A propeptide spans 280–282 (SIM) (removed in mature form).

It belongs to the peroxin-19 family.

It localises to the peroxisome. The polypeptide is Putative peroxisomal biogenesis factor 19 (prx-19) (Caenorhabditis elegans).